The sequence spans 196 residues: uncharacterized protein (196 aa).

Residues 7 to 67 enclose the HTH tetR-type domain; it reads RNTKEKILTA…AVIDNHVKIW (61 aa). Positions 30–49 form a DNA-binding region, H-T-H motif; it reads SINDILDETATGKGQFYYYF.

This is an uncharacterized protein from Lactococcus lactis subsp. lactis (Streptococcus lactis).